We begin with the raw amino-acid sequence, 78 residues long: MSEVVVKEQLEQYLSKIERLEQEKADLSEEIKDIFQDASSHGFDVKAMKTVLKLKKLDKDKLAEQDAMLELYRDTLGI.

This sequence belongs to the UPF0335 family.

The protein is UPF0335 protein RBE_1185 of Rickettsia bellii (strain RML369-C).